Here is a 242-residue protein sequence, read N- to C-terminus: Probable transcriptional regulatory protein Bmul_0984/BMULJ_02280 (242 aa).

It belongs to the TACO1 family.

Its subcellular location is the cytoplasm. The polypeptide is Probable transcriptional regulatory protein Bmul_0984/BMULJ_02280 (Burkholderia multivorans (strain ATCC 17616 / 249)).